A 187-amino-acid chain; its full sequence is UPF0301 protein Sputcn32_2681 (187 aa).

It belongs to the UPF0301 (AlgH) family.

In Shewanella putrefaciens (strain CN-32 / ATCC BAA-453), this protein is UPF0301 protein Sputcn32_2681.